The primary structure comprises 121 residues: Cu-Zn superoxide dismutase-like protein (121 aa).

Cysteines 48 and 98 form a disulfide.

It belongs to the Cu-Zn superoxide dismutase family.

Its subcellular location is the host cytoplasm. Its function is as follows. Virion protein with no enzymatic activity. This is Cu-Zn superoxide dismutase-like protein from Vaccinia virus (strain Ankara) (VACV).